Reading from the N-terminus, the 38-residue chain is Large ribosomal subunit protein bL36 (38 aa).

Belongs to the bacterial ribosomal protein bL36 family.

The protein is Large ribosomal subunit protein bL36 of Hamiltonella defensa subsp. Acyrthosiphon pisum (strain 5AT).